The primary structure comprises 475 residues: Putative poly(A) polymerase catalytic subunit (475 aa).

This sequence belongs to the poxviridae poly(A) polymerase catalytic subunit family. Highly divergent.

It is found in the virion. It carries out the reaction RNA(n) + ATP = RNA(n)-3'-adenine ribonucleotide + diphosphate. Its function is as follows. Polymerase that creates the 3'-poly(A) tail of mRNA's. The protein is Putative poly(A) polymerase catalytic subunit of Ornithodoros (relapsing fever ticks).